Consider the following 461-residue polypeptide: General transcription and DNA repair factor IIH subunit SSL1 (461 aa).

The interval 1-70 (MAPVVISESE…RLSNRNLQGS (70 aa)) is disordered. Residues 26–37 (VHFDGEGDDRVD) show a composition bias toward basic and acidic residues. The segment covering 53 to 63 (HVQRKKKKRLS) has biased composition (basic residues). The VWFA domain maps to 125-304 (SLILTLDCSE…THLKELFNEA (180 aa)). Residues 349-366 (CPNCHSKVCSLPTVCPCC) form a C4-type zinc finger.

The protein belongs to the GTF2H2 family. Component of the 7-subunit TFIIH core complex composed of XPB/SSL2, XPD/RAD3, SSL1, TFB1, TFB2, TFB4 and TFB5, which is active in NER. The core complex associates with the 3-subunit CTD-kinase module TFIIK composed of CCL1, KIN28 and TFB3 to form the 10-subunit holoenzyme (holo-TFIIH) active in transcription. An additionnal subunit, TFB6, plays a role in the dissociation of the SSL2 helicase from TFIIH after transcription initiation.

It is found in the nucleus. In terms of biological role, component of the general transcription and DNA repair factor IIH (TFIIH) core complex, which is involved in general and transcription-coupled nucleotide excision repair (NER) of damaged DNA and, when complexed to TFIIK, in RNA transcription by RNA polymerase II. In NER, TFIIH acts by opening DNA around the lesion to allow the excision of the damaged oligonucleotide and its replacement by a new DNA fragment. In transcription, TFIIH has an essential role in transcription initiation. When the pre-initiation complex (PIC) has been established, TFIIH is required for promoter opening and promoter escape. Phosphorylation of the C-terminal tail (CTD) of the largest subunit of RNA polymerase II by the kinase module TFIIK controls the initiation of transcription. This is General transcription and DNA repair factor IIH subunit SSL1 (SSL1) from Saccharomyces cerevisiae (strain ATCC 204508 / S288c) (Baker's yeast).